The chain runs to 341 residues: Cobalt-precorrin-5B C(1)-methyltransferase (341 aa).

It belongs to the CbiD family.

It catalyses the reaction Co-precorrin-5B + S-adenosyl-L-methionine = Co-precorrin-6A + S-adenosyl-L-homocysteine. The protein operates within cofactor biosynthesis; adenosylcobalamin biosynthesis; cob(II)yrinate a,c-diamide from sirohydrochlorin (anaerobic route): step 6/10. Catalyzes the methylation of C-1 in cobalt-precorrin-5B to form cobalt-precorrin-6A. The protein is Cobalt-precorrin-5B C(1)-methyltransferase of Picrophilus torridus (strain ATCC 700027 / DSM 9790 / JCM 10055 / NBRC 100828 / KAW 2/3).